Here is a 221-residue protein sequence, read N- to C-terminus: uncharacterized protein (221 aa).

Positions 1–18 (MKRFLLLIILFGISFSFV) are cleaved as a signal peptide.

This is an uncharacterized protein from Aquifex aeolicus (strain VF5).